Reading from the N-terminus, the 247-residue chain is Neurotrophic factor BDNF precursor form (247 aa).

The N-terminal stretch at 1 to 18 is a signal peptide; the sequence is MTILFLTMVISYFGCMKA. The propeptide occupies 19-128; the sequence is APMKEANVRG…AANMSVRVRR (110 aa). A glycan (N-linked (GlcNAc...) asparagine) is linked at N121. 3 disulfide bridges follow: C141-C208, C186-C237, and C196-C239.

This sequence belongs to the NGF-beta family. Monomers and homodimers. Binds to NTRK2/TRKB. Can form heterodimers with other neurotrophin family members, such as NTF3 and NTF4 (in vitro), but the physiological relevance of this is not clear. BDNF precursor form: interacts with the heterodimer formed by NGFR and SORCS2. Mature BDNF has much lower affinity for the heterodimer formed by NGFR and SORCS2. N-glycosylated and glycosulfated, contrary to mature BDNF. In terms of processing, mature BDNF is produced by proteolytic removal of the propeptide, catalyzed by a FURIN family member. In addition, the precursor form is proteolytically cleaved within the propeptide, but this is not an obligatory intermediate for the production of mature BDNF. Can be converted into mature BDNF by plasmin (PLG).

It is found in the secreted. In terms of biological role, important signaling molecule that activates signaling cascades downstream of NTRK2. During development, promotes the survival and differentiation of selected neuronal populations of the peripheral and central nervous systems. Participates in axonal growth, pathfinding and in the modulation of dendritic growth and morphology. Major regulator of synaptic transmission and plasticity at adult synapses in many regions of the CNS. The versatility of BDNF is emphasized by its contribution to a range of adaptive neuronal responses including long-term potentiation (LTP), long-term depression (LTD), certain forms of short-term synaptic plasticity, as well as homeostatic regulation of intrinsic neuronal excitability. Important signaling molecule that activates signaling cascades downstream of NTRK2. Activates signaling cascades via the heterodimeric receptor formed by NGFR and SORCS2. Signaling via NGFR and SORCS2 plays a role in synaptic plasticity and long-term depression (LTD). Binding to NGFR and SORCS2 promotes neuronal apoptosis. Promotes neuronal growth cone collapse. In Felis catus (Cat), this protein is Neurotrophic factor BDNF precursor form (BDNF).